Reading from the N-terminus, the 210-residue chain is UPF0301 protein CPS_1252 (210 aa).

The protein belongs to the UPF0301 (AlgH) family.

This is UPF0301 protein CPS_1252 from Colwellia psychrerythraea (strain 34H / ATCC BAA-681) (Vibrio psychroerythus).